Consider the following 274-residue polypeptide: Dermonecrotic toxin LarSicTox-alphaIB2bii (274 aa).

The active site involves H3. Mg(2+) contacts are provided by E23 and D25. The active-site Nucleophile is the H39. Cystine bridges form between C43–C49 and C45–C188. D83 is a Mg(2+) binding site. N251 is a glycosylation site (N-linked (GlcNAc...) asparagine).

This sequence belongs to the arthropod phospholipase D family. Class II subfamily. Requires Mg(2+) as cofactor. As to expression, expressed by the venom gland.

It is found in the secreted. It carries out the reaction an N-(acyl)-sphingosylphosphocholine = an N-(acyl)-sphingosyl-1,3-cyclic phosphate + choline. It catalyses the reaction an N-(acyl)-sphingosylphosphoethanolamine = an N-(acyl)-sphingosyl-1,3-cyclic phosphate + ethanolamine. The catalysed reaction is a 1-acyl-sn-glycero-3-phosphocholine = a 1-acyl-sn-glycero-2,3-cyclic phosphate + choline. The enzyme catalyses a 1-acyl-sn-glycero-3-phosphoethanolamine = a 1-acyl-sn-glycero-2,3-cyclic phosphate + ethanolamine. Functionally, dermonecrotic toxins cleave the phosphodiester linkage between the phosphate and headgroup of certain phospholipids (sphingolipid and lysolipid substrates), forming an alcohol (often choline) and a cyclic phosphate. This toxin acts on sphingomyelin (SM). It may also act on ceramide phosphoethanolamine (CPE), lysophosphatidylcholine (LPC) and lysophosphatidylethanolamine (LPE), but not on lysophosphatidylserine (LPS), and lysophosphatidylglycerol (LPG). It acts by transphosphatidylation, releasing exclusively cyclic phosphate products as second products. Induces dermonecrosis, hemolysis, increased vascular permeability, edema, inflammatory response, and platelet aggregation. This Loxosceles arizonica (Arizona brown spider) protein is Dermonecrotic toxin LarSicTox-alphaIB2bii.